The sequence spans 159 residues: Immunoglobulin J chain (159 aa).

An N-terminal signal peptide occupies residues 1–21; the sequence is MKTHLLLWGVLAIFVKAVLVT. 3 disulfides stabilise this stretch: Cys34–Cys123, Cys93–Cys113, and Cys131–Cys156. The N-linked (GlcNAc...) (complex) asparagine glycan is linked to Asn70.

Part of the secretory IgA (sIgA) complex that consists of two, four or five IgA monomers, and two additional non-Ig polypeptides, namely the JCHAIN and the secretory component (the proteolytic product of PIGR). Part of the secretory IgM (sIgM) complex that consist of five IgM monomers, and two additional non-Ig polypeptides, namely the JCHAIN and the secretory component (the proteolytic product of PIGR). JCHAIN-containing IgM interacts (via CH4 domain) with FCRM (via Ig-like domain).

It is found in the secreted. Functionally, serves to link two monomer units of either IgM or IgA. In the case of IgM, the J chain-joined dimer is a nucleating unit for the IgM pentamer, and in the case of IgA it induces dimers and/or larger polymers. It also helps to bind these immunoglobulins to secretory component. This chain is Immunoglobulin J chain, found in Mus musculus (Mouse).